We begin with the raw amino-acid sequence, 73 residues long: Cytochrome b559 subunit alpha (73 aa).

A helical membrane pass occupies residues 21–35; that stretch reads IIHSITVPSLFIAGW. Residue histidine 23 participates in heme binding.

Belongs to the PsbE/PsbF family. Heterodimer of an alpha subunit and a beta subunit. PSII is composed of 1 copy each of membrane proteins PsbA, PsbB, PsbC, PsbD, PsbE, PsbF, PsbH, PsbI, PsbJ, PsbK, PsbL, PsbM, PsbT, PsbY, PsbZ, Psb30/Ycf12, at least 3 peripheral proteins of the oxygen-evolving complex and a large number of cofactors. It forms dimeric complexes. The cofactor is heme b.

The protein resides in the plastid. It localises to the chloroplast thylakoid membrane. This b-type cytochrome is tightly associated with the reaction center of photosystem II (PSII). PSII is a light-driven water:plastoquinone oxidoreductase that uses light energy to abstract electrons from H(2)O, generating O(2) and a proton gradient subsequently used for ATP formation. It consists of a core antenna complex that captures photons, and an electron transfer chain that converts photonic excitation into a charge separation. In Bigelowiella natans (Pedinomonas minutissima), this protein is Cytochrome b559 subunit alpha.